Here is a 97-residue protein sequence, read N- to C-terminus: uncharacterized protein (97 aa).

An N-terminal signal peptide occupies residues 1-16 (MKQTVLLLFTALFLSG). Residue C17 is the site of N-palmitoyl cysteine attachment. C17 carries S-diacylglycerol cysteine lipidation.

The protein resides in the cell membrane. This is an uncharacterized protein from Bacillus subtilis (strain 168).